The primary structure comprises 198 residues: MAEFEYPQGFELIAGVDEVGRGPLVGAVVTAAVILDPNNPIDGLTDSKKLSEKKREKLAEEIKQKALAWALGRAEPEEIDALNILQATMLAMQRAIKNLKIQPHFVLIDGNRIPQLAIPAQAVVKGDSLVAEISAASIIAKVSRDHEMEVLDKQYPQYEFAKHKGYPTKVHLAKLAEFGVLPQHRRSFSPVRKLLENE.

The 188-residue stretch at 11 to 198 (ELIAGVDEVG…SPVRKLLENE (188 aa)) folds into the RNase H type-2 domain. Residues aspartate 17, glutamate 18, and aspartate 109 each contribute to the a divalent metal cation site.

Belongs to the RNase HII family. The cofactor is Mn(2+). Mg(2+) serves as cofactor.

It localises to the cytoplasm. It carries out the reaction Endonucleolytic cleavage to 5'-phosphomonoester.. Functionally, endonuclease that specifically degrades the RNA of RNA-DNA hybrids. The protein is Ribonuclease HII of Mannheimia succiniciproducens (strain KCTC 0769BP / MBEL55E).